We begin with the raw amino-acid sequence, 292 residues long: AKT-interacting protein (292 aa).

Positions methionine 1–threonine 63 are disordered. A compositionally biased stretch (basic and acidic residues) spans lysine 14 to leucine 23. Serine 30 is subject to Phosphoserine. Residues tyrosine 74–alanine 222 enclose the UBC core domain.

Belongs to the ubiquitin-conjugating enzyme family. FTS subfamily. In terms of assembly, component of the FTS/Hook/FHIP complex (FHF complex), composed of AKTIP/FTS, FHIP1B, and one or more members of the Hook family of proteins HOOK1, HOOK2, and HOOK3. Interacts directly with HOOK1, HOOK2 and HOOK3. The FHF complex associates with the homotypic vesicular sorting complex (the HOPS complex). Also interacts with AKT1. May interact with FHIP1A. As to expression, ubiquitous. Highest expression in kidney, testis and brain and lowest in spleen and liver.

Its subcellular location is the cytoplasm. The protein localises to the cell membrane. Functionally, component of the FTS/Hook/FHIP complex (FHF complex). The FHF complex may function to promote vesicle trafficking and/or fusion via the homotypic vesicular protein sorting complex (the HOPS complex). Regulates apoptosis by enhancing phosphorylation and activation of AKT1. Increases release of TNFSF6 via the AKT1/GSK3B/NFATC1 signaling cascade. FHF complex promotes the distribution of AP-4 complex to the perinuclear area of the cell. In Mus musculus (Mouse), this protein is AKT-interacting protein (Aktip).